Consider the following 332-residue polypeptide: Biotin synthase (332 aa).

One can recognise a Radical SAM core domain in the interval 46–275 (SDIQRASLLS…RARVRLSAGR (230 aa)). Residues C61, C65, and C68 each contribute to the [4Fe-4S] cluster site. [2Fe-2S] cluster is bound by residues C106, C138, C198, and R270.

The protein belongs to the radical SAM superfamily. Biotin synthase family. In terms of assembly, homodimer. [4Fe-4S] cluster serves as cofactor. [2Fe-2S] cluster is required as a cofactor.

It catalyses the reaction (4R,5S)-dethiobiotin + (sulfur carrier)-SH + 2 reduced [2Fe-2S]-[ferredoxin] + 2 S-adenosyl-L-methionine = (sulfur carrier)-H + biotin + 2 5'-deoxyadenosine + 2 L-methionine + 2 oxidized [2Fe-2S]-[ferredoxin]. The protein operates within cofactor biosynthesis; biotin biosynthesis; biotin from 7,8-diaminononanoate: step 2/2. Functionally, catalyzes the conversion of dethiobiotin (DTB) to biotin by the insertion of a sulfur atom into dethiobiotin via a radical-based mechanism. The sequence is that of Biotin synthase from Methylobacterium sp. (strain 4-46).